A 56-amino-acid chain; its full sequence is Ribosome modulation factor (56 aa).

Belongs to the ribosome modulation factor family.

It is found in the cytoplasm. During stationary phase, converts 70S ribosomes to an inactive dimeric form (100S ribosomes). In Proteus mirabilis (strain HI4320), this protein is Ribosome modulation factor.